Here is a 603-residue protein sequence, read N- to C-terminus: UvrABC system protein C (603 aa).

Residues 15 to 92 (DQPGCYLMKD…IKKHDPRFNI (78 aa)) enclose the GIY-YIG domain. Residues 197 to 232 (KTVKNDLMKKMQEAAENMEFEKAGEFRDQINAIETT) form the UVR domain.

This sequence belongs to the UvrC family. Interacts with UvrB in an incision complex.

The protein localises to the cytoplasm. Its function is as follows. The UvrABC repair system catalyzes the recognition and processing of DNA lesions. UvrC both incises the 5' and 3' sides of the lesion. The N-terminal half is responsible for the 3' incision and the C-terminal half is responsible for the 5' incision. The polypeptide is UvrABC system protein C (Listeria monocytogenes serovar 1/2a (strain ATCC BAA-679 / EGD-e)).